Here is a 338-residue protein sequence, read N- to C-terminus: Flap endonuclease 1 (338 aa).

The segment at 1–98 (MGTDIGDLLQ…ETLNRRKEVR (98 aa)) is N-domain. Mg(2+) is bound by residues Asp27, Asp80, Glu152, Glu154, Asp173, Asp175, and Asp236. An I-domain region spans residues 116–257 (AAYKYAQASS…TALKLIKKHG (142 aa)). The tract at residues 330–338 (RQQTLDQWF) is interaction with PCNA.

This sequence belongs to the XPG/RAD2 endonuclease family. FEN1 subfamily. As to quaternary structure, interacts with PCNA. PCNA stimulates the nuclease activity without altering cleavage specificity. It depends on Mg(2+) as a cofactor.

Structure-specific nuclease with 5'-flap endonuclease and 5'-3' exonuclease activities involved in DNA replication and repair. During DNA replication, cleaves the 5'-overhanging flap structure that is generated by displacement synthesis when DNA polymerase encounters the 5'-end of a downstream Okazaki fragment. Binds the unpaired 3'-DNA end and kinks the DNA to facilitate 5' cleavage specificity. Cleaves one nucleotide into the double-stranded DNA from the junction in flap DNA, leaving a nick for ligation. Also involved in the base excision repair (BER) pathway. Acts as a genome stabilization factor that prevents flaps from equilibrating into structures that lead to duplications and deletions. Also possesses 5'-3' exonuclease activity on nicked or gapped double-stranded DNA. The protein is Flap endonuclease 1 of Methanosarcina barkeri (strain Fusaro / DSM 804).